Here is a 197-residue protein sequence, read N- to C-terminus: MYDYIKGNLTKITAKYIVLETGGLGYVINVANPYSFSNQINQAIQIYIHHVVREDAHLLYGFHTEDEKAVFLNLISVSGIGPTSALAIIAADDNEGLVKAIDHSDVNYLMKFPKIGKKTAQQMVLDLAGKFVDINEVSTDKSKVSTINNNQELEEAVEALLALGYKTNELKKIEKFFEGTTDTAENYIKSALKMLMK.

Residues 1–63 are domain I; sequence MYDYIKGNLT…EDAHLLYGFH (63 aa). The segment at 64–142 is domain II; sequence TEDEKAVFLN…DINEVSTDKS (79 aa). Positions 143 to 147 are flexible linker; it reads KVSTI. Residues 148–197 are domain III; the sequence is NNNQELEEAVEALLALGYKTNELKKIEKFFEGTTDTAENYIKSALKMLMK.

The protein belongs to the RuvA family. In terms of assembly, homotetramer. Forms an RuvA(8)-RuvB(12)-Holliday junction (HJ) complex. HJ DNA is sandwiched between 2 RuvA tetramers; dsDNA enters through RuvA and exits via RuvB. An RuvB hexamer assembles on each DNA strand where it exits the tetramer. Each RuvB hexamer is contacted by two RuvA subunits (via domain III) on 2 adjacent RuvB subunits; this complex drives branch migration. In the full resolvosome a probable DNA-RuvA(4)-RuvB(12)-RuvC(2) complex forms which resolves the HJ.

It is found in the cytoplasm. In terms of biological role, the RuvA-RuvB-RuvC complex processes Holliday junction (HJ) DNA during genetic recombination and DNA repair, while the RuvA-RuvB complex plays an important role in the rescue of blocked DNA replication forks via replication fork reversal (RFR). RuvA specifically binds to HJ cruciform DNA, conferring on it an open structure. The RuvB hexamer acts as an ATP-dependent pump, pulling dsDNA into and through the RuvAB complex. HJ branch migration allows RuvC to scan DNA until it finds its consensus sequence, where it cleaves and resolves the cruciform DNA. This chain is Holliday junction branch migration complex subunit RuvA, found in Streptococcus mutans serotype c (strain ATCC 700610 / UA159).